Here is a 206-residue protein sequence, read N- to C-terminus: ATP phosphoribosyltransferase (206 aa).

Belongs to the ATP phosphoribosyltransferase family. Short subfamily. In terms of assembly, heteromultimer composed of HisG and HisZ subunits.

Its subcellular location is the cytoplasm. It catalyses the reaction 1-(5-phospho-beta-D-ribosyl)-ATP + diphosphate = 5-phospho-alpha-D-ribose 1-diphosphate + ATP. It participates in amino-acid biosynthesis; L-histidine biosynthesis; L-histidine from 5-phospho-alpha-D-ribose 1-diphosphate: step 1/9. Its function is as follows. Catalyzes the condensation of ATP and 5-phosphoribose 1-diphosphate to form N'-(5'-phosphoribosyl)-ATP (PR-ATP). Has a crucial role in the pathway because the rate of histidine biosynthesis seems to be controlled primarily by regulation of HisG enzymatic activity. In Sulfurovum sp. (strain NBC37-1), this protein is ATP phosphoribosyltransferase.